Reading from the N-terminus, the 575-residue chain is Transcription factor coe2 (575 aa).

Residues 63 to 66 (RKSN) are interaction with DNA. A C5-type zinc finger spans residues 151 to 170 (CRVLLTHEVMCSRCCEKKSC). 2 interaction with DNA regions span residues 197-204 (NCLKTAGN) and 236-239 (NNSK). The 83-residue stretch at 254-336 (PCIKAISPSE…CKGAPGRFIY (83 aa)) folds into the IPT/TIG domain. The interval 450 to 487 (IRNTSSISPRGYSSSSTPQQSNYSTPSNSMNGYSNVPM) is disordered. Low complexity predominate over residues 454-476 (SSISPRGYSSSSTPQQSNYSTPS). Over residues 477–487 (NSMNGYSNVPM) the composition is skewed to polar residues.

Belongs to the COE family.

Its subcellular location is the nucleus. May play a pivotal role in the transcriptional cascade that specifies primary neurons in embryos. Stabilizes the higher neural potential of selected progenitor cells that express neurog2/X-ngnr-1 by maintaining Delta-Notch signaling. Thus ensures the transition between neural competence and irreversible commitment to a neural fate. Also promotes neuronal differentiation by activating neurod1 expression, directly or indirectly. This is Transcription factor coe2 from Xenopus tropicalis (Western clawed frog).